A 475-amino-acid polypeptide reads, in one-letter code: Putative poly(A) polymerase catalytic subunit (475 aa).

The protein belongs to the poxviridae poly(A) polymerase catalytic subunit family. Highly divergent.

Its subcellular location is the virion. It catalyses the reaction RNA(n) + ATP = RNA(n)-3'-adenine ribonucleotide + diphosphate. Its function is as follows. Polymerase that creates the 3'-poly(A) tail of mRNA's. The polypeptide is Putative poly(A) polymerase catalytic subunit (Ornithodoros (relapsing fever ticks)).